Here is a 290-residue protein sequence, read N- to C-terminus: Small ribosomal subunit biogenesis GTPase RsgA (290 aa).

The CP-type G domain maps to 62 to 219; the sequence is DNYLIRPQVA…VVDTPGFSTL (158 aa). Residues 111 to 114 and 162 to 170 each bind GTP; these read NKID and GPSGVGKST. Zn(2+)-binding residues include Cys-243, Cys-248, His-250, and Cys-256.

It belongs to the TRAFAC class YlqF/YawG GTPase family. RsgA subfamily. Monomer. Associates with 30S ribosomal subunit, binds 16S rRNA. Zn(2+) serves as cofactor.

It localises to the cytoplasm. Its function is as follows. One of several proteins that assist in the late maturation steps of the functional core of the 30S ribosomal subunit. Helps release RbfA from mature subunits. May play a role in the assembly of ribosomal proteins into the subunit. Circularly permuted GTPase that catalyzes slow GTP hydrolysis, GTPase activity is stimulated by the 30S ribosomal subunit. This Clostridium novyi (strain NT) protein is Small ribosomal subunit biogenesis GTPase RsgA.